We begin with the raw amino-acid sequence, 1228 residues long: Nitrate reductase alpha chain (1228 aa).

Positions 47-111 (DKVVRSTHGV…SFSWYIYSPL (65 aa)) constitute a 4Fe-4S Mo/W bis-MGD-type domain. [4Fe-4S] cluster contacts are provided by H54, C58, C62, and C97. D227 contributes to the Mo-bis(molybdopterin guanine dinucleotide) binding site.

The protein belongs to the prokaryotic molybdopterin-containing oxidoreductase family. It depends on [4Fe-4S] cluster as a cofactor. Mo-bis(molybdopterin guanine dinucleotide) serves as cofactor.

The protein resides in the cell membrane. The catalysed reaction is nitrate + a quinol = a quinone + nitrite + H2O. In terms of biological role, the alpha chain is the actual site of nitrate reduction. This is Nitrate reductase alpha chain (narG) from Bacillus subtilis (strain 168).